The primary structure comprises 428 residues: Putative FBD-associated F-box protein At5g56390 (428 aa).

The F-box domain occupies 2 to 50 (DKISQLHDELLLGILSLLPNAKDVVATMVLSKRWRYLWMMVPSLVYDDS). The 51-residue stretch at 344 to 394 (CWNETSLVPEYLLPSLETFEWVDYEGTKTEKQVVAFILRIASCLKQATIVS) folds into the FBD domain.

The polypeptide is Putative FBD-associated F-box protein At5g56390 (Arabidopsis thaliana (Mouse-ear cress)).